We begin with the raw amino-acid sequence, 369 residues long: Protein RecA (369 aa).

77 to 84 (GPESSGKT) is a binding site for ATP.

This sequence belongs to the RecA family.

It is found in the cytoplasm. In terms of biological role, can catalyze the hydrolysis of ATP in the presence of single-stranded DNA, the ATP-dependent uptake of single-stranded DNA by duplex DNA, and the ATP-dependent hybridization of homologous single-stranded DNAs. It interacts with LexA causing its activation and leading to its autocatalytic cleavage. This chain is Protein RecA, found in Corynebacterium pseudotuberculosis (strain C231).